A 406-amino-acid polypeptide reads, in one-letter code: Odorant receptor 42a (406 aa).

The Cytoplasmic segment spans residues 1 to 44 (MDLRRWFPTLYTQSKDSPVRSRDATLYLLRCVFLMGVRKPPAKF). Residues 45 to 65 (FVAYVLWSFALNFCSTFYQPI) form a helical membrane-spanning segment. The Extracellular segment spans residues 66 to 86 (GFLTGYISHLSEFSPGEFLTS). Residues 87 to 107 (LQVAFNAWSCSTKVLIVWALV) traverse the membrane as a helical segment. Residues 108–142 (KRFDEANNLLDEMDRRITDPGERLQIHRAVSLSNR) are Cytoplasmic-facing. A helical transmembrane segment spans residues 143–163 (IFFFFMAVYMVYATNTFLSAI). Over 164-181 (FIGRPPYQNYYPFLDWRS) the chain is Extracellular. A helical membrane pass occupies residues 182-202 (STLHLALQAGLEYFAMAGACF). Residues 203 to 271 (QDVCVDCYPV…DCLRPVISGT (69 aa)) are Cytoplasmic-facing. A helical membrane pass occupies residues 272–292 (IFVQFLVVGLVLGFTLINIVL). The Extracellular segment spans residues 293 to 298 (FANLGS). A helical transmembrane segment spans residues 299-319 (AIAALSFMAAVLLETTPFCIL). Topologically, residues 320–359 (CNYLTEDCYKLADALFQSNWIDEEKRYQKTLMYFLQKLQQ) are cytoplasmic. The chain crosses the membrane as a helical span at residues 360 to 380 (PITFMAMNVFPISVGTNISVT). The Extracellular portion of the chain corresponds to 381–406 (KFSFSVFTLVKQMNISEKLAKSEMEE). N-linked (GlcNAc...) asparagine glycosylation occurs at asparagine 394.

This sequence belongs to the insect chemoreceptor superfamily. Heteromeric odorant receptor channel (TC 1.A.69) family. Or2a subfamily. As to quaternary structure, interacts with Orco. Complexes exist early in the endomembrane system in olfactory sensory neurons (OSNs), coupling these complexes to the conserved ciliary trafficking pathway.

It localises to the cell membrane. Functionally, odorant receptor which mediates acceptance or avoidance behavior, depending on its substrates. The odorant receptor repertoire encodes a large collection of odor stimuli that vary widely in identity, intensity, and duration. May form a complex with Orco to form odorant-sensing units, providing sensitive and prolonged odorant signaling and calcium permeability. Involved in the behavioral responses to butanol, ethyl acetate, propyl acetate, and pentyl acetate. Also responds to pyrazines. In Drosophila melanogaster (Fruit fly), this protein is Odorant receptor 42a (Or42a).